Consider the following 89-residue polypeptide: Small ribosomal subunit protein uS15 (89 aa).

It belongs to the universal ribosomal protein uS15 family. In terms of assembly, part of the 30S ribosomal subunit. Forms a bridge to the 50S subunit in the 70S ribosome, contacting the 23S rRNA.

In terms of biological role, one of the primary rRNA binding proteins, it binds directly to 16S rRNA where it helps nucleate assembly of the platform of the 30S subunit by binding and bridging several RNA helices of the 16S rRNA. Forms an intersubunit bridge (bridge B4) with the 23S rRNA of the 50S subunit in the ribosome. The protein is Small ribosomal subunit protein uS15 of Vibrio atlanticus (strain LGP32) (Vibrio splendidus (strain Mel32)).